We begin with the raw amino-acid sequence, 427 residues long: Neuronal pentraxin-2 (427 aa).

A signal peptide spans M1 to A17. N-linked (GlcNAc...) asparagine glycosylation is found at N144 and N185. One can recognise a Pentraxin (PTX) domain in the interval D219–C420. A disulfide bridge connects residues C249 and C309. Ca(2+) contacts are provided by N273, E351, Q352, D353, and Q363. An N-linked (GlcNAc...) asparagine glycan is attached at N389.

As to quaternary structure, homooligomer or heterooligomer (probably pentamer) with neuronal pentraxin receptor (NPTXR). Requires Ca(2+) as cofactor. In terms of tissue distribution, testis specific.

It localises to the cytoplasmic vesicle. Its subcellular location is the secretory vesicle. The protein resides in the acrosome lumen. May be involved in binding, concentrating, and sorting soluble glycoproteins or glycolipids that are destined for the acrosome. The sequence is that of Neuronal pentraxin-2 (NPTX2) from Cavia porcellus (Guinea pig).